We begin with the raw amino-acid sequence, 51 residues long: Large ribosomal subunit protein bL33 (51 aa).

The protein belongs to the bacterial ribosomal protein bL33 family.

This Psychrobacter arcticus (strain DSM 17307 / VKM B-2377 / 273-4) protein is Large ribosomal subunit protein bL33.